The primary structure comprises 659 residues: MPVGGLLPLFSSPAGGGLGGGLGGGLGGGGGGGGRKGSGPSAFRLTEKFVLLLVFSAFITLCFGAIFFLPDSSKLLSGVLFHSSPALQPAADHKPGPGARAEDAADGRARPGEEGAPGDPAAALEDNLARIRENHERALMEAKETLQKLPEEIQRDILMEKEKVAQDQMSNRMGFRLPPVYLVPLIGAIDREPADAAVREKRAKIKEMMKHAWNNYKLYAWGKNELKPVSKGGHSSSLFGNIKGATIVDALDTLFIMKMKNEFEEAKAWVEEHLNFNVNAEVSVFEVNIRFIGGLISAYYLSGEEIFRKKAVELGVKLLPAFYTPSGIPWALLNIKSGIGRNWPWASGGSSILAEFGTLHLEFIHLSYLSGNPFFAEKVMNIRKVLNNLEKPQGLYPNYLNPNSGQWGQYHVSVGGLGDSFYEYLLKAWLMSDKTDLEAKKMYFDAIKAIETHLIRKSRNGLTYIAEWKGGLLEHKMGHLTCFAGGMFALGADDAPDGLTQHYLQLGAEIARTCHESYSRTFVKLGPEAFRFDGGVEAIATRQNEKYYILRPEVVETYLYMWRLTHDPKYRKWAWEAVEALEKHCRVNGGYSGLRDVYVSAQTYDDVQQSFFLAETLKYLYLIFSDDDLLPLEHWIFNTEAHPLPVLSRNIKKVEDNEK.

At 1–48 (MPVGGLLPLFSSPAGGGLGGGLGGGLGGGGGGGGRKGSGPSAFRLTEK) the chain is on the cytoplasmic side. A helical; Signal-anchor for type II membrane protein transmembrane segment spans residues 49–69 (FVLLLVFSAFITLCFGAIFFL). At 70–659 (PDSSKLLSGV…NIKKVEDNEK (590 aa)) the chain is on the lumenal side. A disordered region spans residues 88-121 (QPAADHKPGPGARAEDAADGRARPGEEGAPGDPA). Over residues 91–113 (ADHKPGPGARAEDAADGRARPGE) the composition is skewed to basic and acidic residues. A disulfide bridge connects residues Cys-482 and Cys-514. Glu-528 serves as the catalytic Proton donor. Thr-639 is a binding site for Ca(2+).

The protein belongs to the glycosyl hydrolase 47 family. Ca(2+) is required as a cofactor.

Its subcellular location is the endoplasmic reticulum membrane. It catalyses the reaction N(4)-(alpha-D-Man-(1-&gt;2)-alpha-D-Man-(1-&gt;2)-alpha-D-Man-(1-&gt;3)-[alpha-D-Man-(1-&gt;2)-alpha-D-Man-(1-&gt;3)-[alpha-D-Man-(1-&gt;2)-alpha-D-Man-(1-&gt;6)]-alpha-D-Man-(1-&gt;6)]-beta-D-Man-(1-&gt;4)-beta-D-GlcNAc-(1-&gt;4)-beta-D-GlcNAc)-L-asparaginyl-[protein] (N-glucan mannose isomer 9A1,2,3B1,2,3) + 4 H2O = N(4)-(alpha-D-Man-(1-&gt;3)-[alpha-D-Man-(1-&gt;3)-[alpha-D-Man-(1-&gt;6)]-alpha-D-Man-(1-&gt;6)]-beta-D-Man-(1-&gt;4)-beta-D-GlcNAc-(1-&gt;4)-beta-D-GlcNAc)-L-asparaginyl-[protein] (N-glucan mannose isomer 5A1,2) + 4 beta-D-mannose. The catalysed reaction is N(4)-(alpha-D-Man-(1-&gt;2)-alpha-D-Man-(1-&gt;2)-alpha-D-Man-(1-&gt;3)-[alpha-D-Man-(1-&gt;3)-[alpha-D-Man-(1-&gt;2)-alpha-D-Man-(1-&gt;6)]-alpha-D-Man-(1-&gt;6)]-beta-D-Man-(1-&gt;4)-beta-D-GlcNAc-(1-&gt;4)-beta-D-GlcNAc)-L-asparaginyl-[protein] (N-glucan mannose isomer 8A1,2,3B1,3) + 3 H2O = N(4)-(alpha-D-Man-(1-&gt;3)-[alpha-D-Man-(1-&gt;3)-[alpha-D-Man-(1-&gt;6)]-alpha-D-Man-(1-&gt;6)]-beta-D-Man-(1-&gt;4)-beta-D-GlcNAc-(1-&gt;4)-beta-D-GlcNAc)-L-asparaginyl-[protein] (N-glucan mannose isomer 5A1,2) + 3 beta-D-mannose. It functions in the pathway protein modification; protein glycosylation. Inhibited by both 1-deoxymannojirimycin and kifunensine. In terms of biological role, involved in the maturation of Asn-linked oligosaccharides. Progressively trim alpha-1,2-linked mannose residues from Man(9)GlcNAc(2) to produce Man(5)GlcNAc(2). This chain is Mannosyl-oligosaccharide 1,2-alpha-mannosidase IA (MAN1A1), found in Sus scrofa (Pig).